Reading from the N-terminus, the 243-residue chain is uncharacterized protein (243 aa).

Composition is skewed to basic and acidic residues over residues Met1 to Glu11 and Arg167 to Arg178. 2 disordered regions span residues Met1 to Arg26 and Glu146 to Phe243. Positions Ser185–Glu200 are enriched in low complexity.

This is an uncharacterized protein from Canis lupus familiaris (Dog).